We begin with the raw amino-acid sequence, 616 residues long: Chaperone protein HscA (616 aa).

This sequence belongs to the heat shock protein 70 family.

Its function is as follows. Chaperone involved in the maturation of iron-sulfur cluster-containing proteins. Has a low intrinsic ATPase activity which is markedly stimulated by HscB. Involved in the maturation of IscU. This Pectobacterium carotovorum subsp. carotovorum (strain PC1) protein is Chaperone protein HscA.